Here is a 345-residue protein sequence, read N- to C-terminus: Serine proteinase inhibitor 2 (345 aa).

The protein belongs to the serpin family. Poxviruses subfamily.

The protein resides in the host cytoplasm. Its function is as follows. Viral serpin that inhibits both cysteine and serine proteinases involved in the regulation of host inflammatory and apoptosis processes. Major anti-apoptotic protein which inhibits both intrinsic and extrinsic pathways and strongly cleaves host CASP1 and CASP8 but is a rather poor inhibitor of host CASP3. Prevents the proteolytic activity of host interleukin-1-beta converting enzyme (ICE) and ICE-like enzymes. Can also block apoptosis through host tumor necrosis factor (TNF) receptor. The inhibition of host ICE is an example of a 'cross-class' interaction, in which a serpin inhibits a non-serine proteinase. Also inhibits granzyme B. The sequence is that of Serine proteinase inhibitor 2 (OPG199) from Rabbitpox virus (strain Utrecht) (RPV).